We begin with the raw amino-acid sequence, 186 residues long: LIM domain-containing protein DDB_G0271356 (186 aa).

LIM zinc-binding domains are found at residues 7 to 67 (PECY…DKFA), 68 to 127 (PKCQ…KIGF), and 128 to 186 (LCRH…KLYG).

In Dictyostelium discoideum (Social amoeba), this protein is LIM domain-containing protein DDB_G0271356.